Here is a 476-residue protein sequence, read N- to C-terminus: MVFNRYALITNCNHKTLGLYYLWFSFLFGIYGFLLSVILRTELYSSSLRIIAQENVNLYNMIFTVHGIIMIFFNIMPGLFGGFGNYYLPILCGSSELAYPRINSISLLLQPIAFILVILSTAAEFGGGTGWTWYPPLSTSLMSLSPVAVDVIVIGLLVSGIASIMSSLNFLTTVMHLRAKGLTLGILSVSTWSLIITSIMLLLTLPVLTGGVLMLLSDLHFNTLFFDPTFAGDPILYQHLLWFFGHPEVYILILPAFGIISHVISTNYSRSLFGNQSMILAMGCIAVLGSVVWVHHMYTTGLEVDTRAFFTSTTILISIPTGTKVFNWLCTYMSTNFGITHSSSLLSLLFICTFTFGGTTGVILGNGAIDVALHDTYYVIAHFHFVLSIGAIIALFTSVSFFQESFFGKTLRENTIIVLWSILFFVGVVLTFLPMHFLGFNVMPRRIPDYPDALNGWNMICSIGSTMTLFGLLIFK.

A helical transmembrane segment spans residues 19–39 (LYYLWFSFLFGIYGFLLSVIL). Residue Glu-42 coordinates Ca(2+). 8 helical membrane-spanning segments follow: residues 61-81 (MIFTVHGIIMIFFNIMPGLFG), 105-125 (ISLLLQPIAFILVILSTAAEF), 144-164 (LSPVAVDVIVIGLLVSGIASI), 194-214 (LIITSIMLLLTLPVLTGGVLM), 240-260 (LLWFFGHPEVYILILPAFGII), 278-298 (MILAMGCIAVLGSVVWVHHMY), 309-329 (FFTSTTILISIPTGTKVFNWL), and 345-365 (LLSLLFICTFTFGGTTGVILG). Position 66 (His-66) interacts with Fe(II)-heme a. Residue His-246 participates in Cu cation binding. Positions 246–250 (HPEVY) form a cross-link, 1'-histidyl-3'-tyrosine (His-Tyr). Tyr-250 contributes to the O2 binding site. Cu cation-binding residues include His-295 and His-296. Mg(2+) is bound by residues His-374 and Asp-375. 2 helical membrane passes run 379 to 399 (VIAHFHFVLSIGAIIALFTSV) and 415 to 435 (TIIVLWSILFFVGVVLTFLPM). Residue His-382 coordinates heme a3. Fe(II)-heme a is bound at residue His-384. Pro-448 provides a ligand contact to Ca(2+). The helical transmembrane segment at 455–475 (NGWNMICSIGSTMTLFGLLIF) threads the bilayer.

It belongs to the heme-copper respiratory oxidase family. In terms of assembly, component of the cytochrome c oxidase (complex IV, CIV), a multisubunit enzyme composed of a catalytic core of 3 subunits and several supernumerary subunits. The complex exists as a monomer or a dimer and forms supercomplexes (SCs) in the inner mitochondrial membrane with ubiquinol-cytochrome c oxidoreductase (cytochrome b-c1 complex, complex III, CIII). Requires heme as cofactor. The cofactor is Cu cation.

Its subcellular location is the mitochondrion inner membrane. It catalyses the reaction 4 Fe(II)-[cytochrome c] + O2 + 8 H(+)(in) = 4 Fe(III)-[cytochrome c] + 2 H2O + 4 H(+)(out). It participates in energy metabolism; oxidative phosphorylation. Its function is as follows. Component of the cytochrome c oxidase, the last enzyme in the mitochondrial electron transport chain which drives oxidative phosphorylation. The respiratory chain contains 3 multisubunit complexes succinate dehydrogenase (complex II, CII), ubiquinol-cytochrome c oxidoreductase (cytochrome b-c1 complex, complex III, CIII) and cytochrome c oxidase (complex IV, CIV), that cooperate to transfer electrons derived from NADH and succinate to molecular oxygen, creating an electrochemical gradient over the inner membrane that drives transmembrane transport and the ATP synthase. Cytochrome c oxidase is the component of the respiratory chain that catalyzes the reduction of oxygen to water. Electrons originating from reduced cytochrome c in the intermembrane space (IMS) are transferred via the dinuclear copper A center (CU(A)) of subunit 2 and heme A of subunit 1 to the active site in subunit 1, a binuclear center (BNC) formed by heme A3 and copper B (CU(B)). The BNC reduces molecular oxygen to 2 water molecules using 4 electrons from cytochrome c in the IMS and 4 protons from the mitochondrial matrix. This chain is Cytochrome c oxidase subunit 1 (COI), found in Plasmodium chabaudi.